We begin with the raw amino-acid sequence, 198 residues long: Recombination protein RecR (198 aa).

The C4-type zinc finger occupies 57–72; sequence CSVCGHITDQDPCYIC. The Toprim domain maps to 80–175; that stretch reads SVICVVQDPK…KLSRIAHGLP (96 aa).

The protein belongs to the RecR family.

Its function is as follows. May play a role in DNA repair. It seems to be involved in an RecBC-independent recombinational process of DNA repair. It may act with RecF and RecO. This is Recombination protein RecR from Bacillus pumilus (strain SAFR-032).